A 54-amino-acid polypeptide reads, in one-letter code: UPF0057 membrane protein ssr1169 (54 aa).

2 helical membrane-spanning segments follow: residues 3 to 23 (IVKI…QVGI) and 31 to 51 (LLLT…WVIA).

This sequence belongs to the UPF0057 (PMP3) family.

The protein localises to the cell membrane. In Synechocystis sp. (strain ATCC 27184 / PCC 6803 / Kazusa), this protein is UPF0057 membrane protein ssr1169.